Here is a 384-residue protein sequence, read N- to C-terminus: MKPQTKLSENSSRCEKVLYSEVITQLIYFLTSKKITNLGKIRLVKSIRDSFLSQLENILCFFLVYRTTYSFGVCLMKRFLFNKFFNRHPFTRVKSCFSSSSPSKFSFTQWLVGFTDGDGCFSISKQKIKNGKNKWSLTFKLTQNLYNYRILYFIKRNLGIGSLYKESSTNTVIYRLRRREHLKKIIDIFDQFPLLTKKYWDYYLFKKAFLILEDANLNSFEKNSKLEEIRIEKKSLKQYSPVNLEKYLTKSWLIGFIEAEGSFYLLQKSPVRIIHGFEITQNYEQPLLAQISEFLFNSQISPKIKSKKNSLITNYSLSTSSKERMLFLSSYFENCFKGVKSLEFKIWSRSLRKNYNFEQLLRARDLIRKLKNKYSRGSQHPKDK.

Belongs to the LAGLIDADG endonuclease family.

The protein resides in the mitochondrion. Its function is as follows. Probable mitochondrial DNA endonuclease involved in intron homing. The sequence is that of Probable intron-encoded endonuclease Cox1-I1b (cox1-I1b) from Schizosaccharomyces pombe (strain 972 / ATCC 24843) (Fission yeast).